We begin with the raw amino-acid sequence, 475 residues long: Ribulose bisphosphate carboxylase large chain (475 aa).

Positions 1-2 (MS) are excised as a propeptide. Position 3 is an N-acetylproline (proline 3). Lysine 14 bears the N6,N6,N6-trimethyllysine mark. Substrate-binding residues include asparagine 123 and threonine 173. Lysine 175 acts as the Proton acceptor in catalysis. Substrate is bound at residue lysine 177. Mg(2+) contacts are provided by lysine 201, aspartate 203, and glutamate 204. Lysine 201 is subject to N6-carboxylysine. The active-site Proton acceptor is histidine 294. Residues arginine 295, histidine 327, and serine 379 each coordinate substrate.

It belongs to the RuBisCO large chain family. Type I subfamily. Heterohexadecamer of 8 large chains and 8 small chains; disulfide-linked. The disulfide link is formed within the large subunit homodimers. It depends on Mg(2+) as a cofactor. In terms of processing, the disulfide bond which can form in the large chain dimeric partners within the hexadecamer appears to be associated with oxidative stress and protein turnover.

Its subcellular location is the plastid. The protein localises to the chloroplast. It catalyses the reaction 2 (2R)-3-phosphoglycerate + 2 H(+) = D-ribulose 1,5-bisphosphate + CO2 + H2O. The catalysed reaction is D-ribulose 1,5-bisphosphate + O2 = 2-phosphoglycolate + (2R)-3-phosphoglycerate + 2 H(+). RuBisCO catalyzes two reactions: the carboxylation of D-ribulose 1,5-bisphosphate, the primary event in carbon dioxide fixation, as well as the oxidative fragmentation of the pentose substrate in the photorespiration process. Both reactions occur simultaneously and in competition at the same active site. The protein is Ribulose bisphosphate carboxylase large chain of Pelargonium hortorum (Common geranium).